Reading from the N-terminus, the 480-residue chain is MKGVWYRGLSSIDGPIVVAKRREGAFYGEITAIRDRFGALRTGRIIDLSQECCLIQVFGSTLGLSLDGACLEFLDVPMQLRVCEGLMGRVFDGLGRPIDGFPEVLSSQLRNVNGYPINPYARVYPRDFIQTGISAIDGMNTLIRGQKLPIFSGNGLAHNRLAAQIIRQAKILGTDEAFVMVFAGMGIKHDVARFFVSSFEETGVLSKVVMFLSLADAPSIERIITPRCALTAAEYLAFEKNKHVLVIFTDMTNYCEALREVSTTRGEVPGRKGYPGYLYSDLAELYERAGRVKGSSGSVTQIPILTMPNDDISHPIPDLTGYITEGQIVLQRDLSQRGLYPPIGCLPSLSRLMKDGIGEGMTRADHHAVSSQLFASYARVQSVRSLASIVGEEELPALDKCYLRFGDLFEQYFLTQDEHEDRSISQTLDIGWSLLSLLPRTELYRIDPKLIDQYLTASCSAVSDQLRKAIEEARTPVADA.

The protein belongs to the ATPase alpha/beta chains family.

In terms of biological role, produces ATP from ADP in the presence of a proton gradient across the membrane. The V-type beta chain is a regulatory subunit. This is V-type ATP synthase beta chain 2 (atpB2) from Treponema pallidum (strain Nichols).